The primary structure comprises 412 residues: LL-diaminopimelate aminotransferase (412 aa).

Residues Y15 and G42 each contribute to the substrate site. Residues Y72, 108–109 (SK), Y132, N187, Y218, and 246–248 (SFS) contribute to the pyridoxal 5'-phosphate site. Substrate contacts are provided by K109, Y132, and N187. N6-(pyridoxal phosphate)lysine is present on K249. Positions 257 and 292 each coordinate pyridoxal 5'-phosphate. Residues N292 and R388 each coordinate substrate.

This sequence belongs to the class-I pyridoxal-phosphate-dependent aminotransferase family. LL-diaminopimelate aminotransferase subfamily. In terms of assembly, homodimer. The cofactor is pyridoxal 5'-phosphate.

It carries out the reaction (2S,6S)-2,6-diaminopimelate + 2-oxoglutarate = (S)-2,3,4,5-tetrahydrodipicolinate + L-glutamate + H2O + H(+). Its pathway is amino-acid biosynthesis; L-lysine biosynthesis via DAP pathway; LL-2,6-diaminopimelate from (S)-tetrahydrodipicolinate (aminotransferase route): step 1/1. Its function is as follows. Involved in the synthesis of meso-diaminopimelate (m-DAP or DL-DAP), required for both lysine and peptidoglycan biosynthesis. Catalyzes the direct conversion of tetrahydrodipicolinate to LL-diaminopimelate. The chain is LL-diaminopimelate aminotransferase from Synechocystis sp. (strain ATCC 27184 / PCC 6803 / Kazusa).